A 251-amino-acid polypeptide reads, in one-letter code: Ribonuclease PH (251 aa).

Residues Arg-90 and 128 to 130 (GTR) each bind phosphate.

The protein belongs to the RNase PH family. In terms of assembly, homohexameric ring arranged as a trimer of dimers.

It catalyses the reaction tRNA(n+1) + phosphate = tRNA(n) + a ribonucleoside 5'-diphosphate. Phosphorolytic 3'-5' exoribonuclease that plays an important role in tRNA 3'-end maturation. Removes nucleotide residues following the 3'-CCA terminus of tRNAs; can also add nucleotides to the ends of RNA molecules by using nucleoside diphosphates as substrates, but this may not be physiologically important. Probably plays a role in initiation of 16S rRNA degradation (leading to ribosome degradation) during starvation. This chain is Ribonuclease PH, found in Leifsonia xyli subsp. xyli (strain CTCB07).